The primary structure comprises 41 residues: Trypsin inhibitor 2c (41 aa).

Disulfide bonds link C11/C32 and C15/C28.

Its function is as follows. Inhibits bovine trypsin with a Ki of 0.174 nM and trypsin-like proteases from G.mellonella larvae. Has no activity against serine proteases chymotrypsin, subtilisin and elastase. Has no activity against cysteine proteases from beetle gut. This Fagopyrum esculentum (Common buckwheat) protein is Trypsin inhibitor 2c.